Here is a 227-residue protein sequence, read N- to C-terminus: uncharacterized protein (227 aa).

The signal sequence occupies residues 1–22; it reads MDSVMRKSLFLLLPLVVTNAHA.

This is an uncharacterized protein from Salmonella typhi.